The chain runs to 616 residues: Dihydroxy-acid dehydratase (616 aa).

Aspartate 81 is a binding site for Mg(2+). Residue cysteine 122 coordinates [2Fe-2S] cluster. Mg(2+)-binding residues include aspartate 123 and lysine 124. Lysine 124 is subject to N6-carboxylysine. Cysteine 195 lines the [2Fe-2S] cluster pocket. Glutamate 491 is a binding site for Mg(2+). The active-site Proton acceptor is the serine 517.

The protein belongs to the IlvD/Edd family. Homodimer. It depends on [2Fe-2S] cluster as a cofactor. The cofactor is Mg(2+).

It catalyses the reaction (2R)-2,3-dihydroxy-3-methylbutanoate = 3-methyl-2-oxobutanoate + H2O. The enzyme catalyses (2R,3R)-2,3-dihydroxy-3-methylpentanoate = (S)-3-methyl-2-oxopentanoate + H2O. The protein operates within amino-acid biosynthesis; L-isoleucine biosynthesis; L-isoleucine from 2-oxobutanoate: step 3/4. Its pathway is amino-acid biosynthesis; L-valine biosynthesis; L-valine from pyruvate: step 3/4. Its function is as follows. Functions in the biosynthesis of branched-chain amino acids. Catalyzes the dehydration of (2R,3R)-2,3-dihydroxy-3-methylpentanoate (2,3-dihydroxy-3-methylvalerate) into 2-oxo-3-methylpentanoate (2-oxo-3-methylvalerate) and of (2R)-2,3-dihydroxy-3-methylbutanoate (2,3-dihydroxyisovalerate) into 2-oxo-3-methylbutanoate (2-oxoisovalerate), the penultimate precursor to L-isoleucine and L-valine, respectively. The chain is Dihydroxy-acid dehydratase from Shewanella sediminis (strain HAW-EB3).